A 1142-amino-acid polypeptide reads, in one-letter code: Serine/threonine-protein kinase GIN4 (1142 aa).

A Protein kinase domain is found at 19–289; the sequence is WKLGETLGLG…TRDILKHPLL (271 aa). ATP is bound by residues 25–33 and K48; that span reads LGLGSTGKV. D156 functions as the Proton acceptor in the catalytic mechanism. Disordered regions lie at residues 378-412 and 425-469; these read KKRQ…SVTS and ASSA…RNKR. A compositionally biased stretch (low complexity) spans 382–395; that stretch reads SISSVSVSPSKKVS. Position 406 is a phosphoserine (S406). Over residues 425-440 the composition is skewed to low complexity; sequence ASSASSSNLTTPGSSK. A compositionally biased stretch (basic residues) spans 441 to 452; the sequence is RLSKNFSSKKKL. Residues 454–465 are compositionally biased toward polar residues; sequence TIVNQSSPTPAS. Phosphoserine is present on residues S465, S471, S617, S689, S719, S805, S807, and S883. The interval 676-698 is disordered; the sequence is DPGIMFSSPTEEVSPVEPKRTEN. Phosphothreonine is present on T884. Positions 903–1031 are disordered; the sequence is NEAKQTDNLH…NTAIGNGSFF (129 aa). Basic and acidic residues-rich tracts occupy residues 923-937, 962-984, and 996-1021; these read NELR…DQAH, KEEK…KVVD, and KIRE…KQDK. At S930 the chain carries Phosphoserine.

It belongs to the protein kinase superfamily. CAMK Ser/Thr protein kinase family. NIM1 subfamily. As to quaternary structure, component of the GIN4 complex composed of at least BNI5, CDC3, CDC10, CDC11, CDC12, GIN4, NAP1 and SHS1 which forms a ring at the bud neck.

Its subcellular location is the cytoplasm. The protein resides in the bud neck. It catalyses the reaction L-seryl-[protein] + ATP = O-phospho-L-seryl-[protein] + ADP + H(+). The catalysed reaction is L-threonyl-[protein] + ATP = O-phospho-L-threonyl-[protein] + ADP + H(+). Serine/threonine-protein kinase which regulates the localization and the function of the septins during mitosis. Phosphorylates SHS1. This chain is Serine/threonine-protein kinase GIN4 (GIN4), found in Saccharomyces cerevisiae (strain ATCC 204508 / S288c) (Baker's yeast).